An 89-amino-acid polypeptide reads, in one-letter code: AETRNFALRDKKGNEIGVFTGKQPRQAALKAANRGHKDIRLRERGTKKVHIFAGERVKVKKPKGAPAWMPNEIWKPKVKKIGVEKLDEI.

Its function is as follows. Protects DNA against thermal denaturation and modulates transcription. This chain is Chromosomal protein MC1a, found in Methanothrix soehngenii (Methanosaeta concilii).